A 278-amino-acid chain; its full sequence is MALKTFNPTTPGQRQLVMVDRSALYKGKPLKKLTEGKHSNGGRGNTGRITVRFRGGGHKQTYRLIDFKRTKVDVPATVERLEYDPNRTAFIALIKYADGELSYILAPQRLAVGDTVVAGSYVDVKPGNAMPMGNMPVGTIVHNVEMKIGKGGQMARSAGTYAQIVGRDHDYVILRLNSGEQRMVHGRCMATIGAVSNHDHMNTSIGKAGRTRWLGRRPHNRGVVMNPIDHPHGGGEGRTSGGRHPVTPWGKPTKGKKTRSNKSTNKFILISRHKRKKK.

The interval 222–278 (GVVMNPIDHPHGGGEGRTSGGRHPVTPWGKPTKGKKTRSNKSTNKFILISRHKRKKK) is disordered.

This sequence belongs to the universal ribosomal protein uL2 family. In terms of assembly, part of the 50S ribosomal subunit. Forms a bridge to the 30S subunit in the 70S ribosome.

In terms of biological role, one of the primary rRNA binding proteins. Required for association of the 30S and 50S subunits to form the 70S ribosome, for tRNA binding and peptide bond formation. It has been suggested to have peptidyltransferase activity; this is somewhat controversial. Makes several contacts with the 16S rRNA in the 70S ribosome. This Afipia carboxidovorans (strain ATCC 49405 / DSM 1227 / KCTC 32145 / OM5) (Oligotropha carboxidovorans) protein is Large ribosomal subunit protein uL2.